The sequence spans 962 residues: SH3 domain-binding protein 4 (962 aa).

In terms of domain architecture, SH3 1 spans 55–114; it reads GNAKEVIAIKDYCPNNFTTLKFSKGDHLYVLDTSGGEWWYAHNTTEMGYIPSSYVQPLNY. 5 positions are modified to phosphoserine: Ser131, Ser245, Ser250, Ser278, and Ser295. The ZU5 domain maps to 316–453; it reads TNIVCKLDSS…LEPCMYLAIV (138 aa). Ser636 carries the phosphoserine modification. The SH3 2 domain occupies 653 to 723; sequence SSLKFGKLLK…HTKNVLVVGK (71 aa).

As to quaternary structure, homodimer or homooligomer. Interacts with DNM2, EPS15, clathrin, the adapter protein complex 2/AP-2 and TFRC. Interacts with the Rag GTPases RRAGA, RRAGB, RRAGC and RRAGD; the interaction is most probably direct, preferentially occurs with their inactive GDP-bound form and is negatively regulated by amino acids. Post-translationally, phosphorylated upon EGF stimulation. Phosphorylation prevents interaction with DNM2.

It is found in the membrane. Its subcellular location is the clathrin-coated pit. The protein resides in the cytoplasmic vesicle. The protein localises to the clathrin-coated vesicle. It localises to the nucleus. Functionally, may function in transferrin receptor internalization at the plasma membrane through a cargo-specific control of clathrin-mediated endocytosis. Alternatively, may act as a negative regulator of the amino acid-induced TOR signaling by inhibiting the formation of active Rag GTPase complexes. Preferentially binds inactive Rag GTPase complexes and prevents their interaction with the mTORC1 complex inhibiting its relocalization to lysosomes and its activation. Thereby, may indirectly regulate cell growth, proliferation and autophagy. The protein is SH3 domain-binding protein 4 (Sh3bp4) of Mus musculus (Mouse).